We begin with the raw amino-acid sequence, 503 residues long: Probable voltage-gated potassium channel subunit kvs-4 (503 aa).

Residues 1-231 are Cytoplasmic-facing; sequence MNSAIMQGAA…EPASSGKAQA (231 aa). A Required for dendritic localization motif is present at residues 217–219; that stretch reads WNI. A helical membrane pass occupies residues 232-252; sequence FAVCSVVFVLISISGLVLGSL. Over 253 to 275 the chain is Extracellular; sequence PELQVATKQRNNLTGEEFTEMEP. An N-linked (GlcNAc...) asparagine glycan is attached at asparagine 264. A helical membrane pass occupies residues 276–296; it reads MPILGYIEYVCIVWFTMEYGL. Residues 297–313 are Cytoplasmic-facing; the sequence is KMLVSAERSKTFRQLLN. A helical membrane pass occupies residues 314–334; it reads IIDLLAILPFIIEMLLLIFGI. The Extracellular segment spans residues 335–346; the sequence is STEQLRDLKGAF. A helical; Voltage-sensor membrane pass occupies residues 347 to 366; the sequence is LVIRILRVLRVIRVLKLGRY. The Cytoplasmic portion of the chain corresponds to 367 to 383; it reads SSGLQMFGKTLKASFRQ. Residues 368 to 383 are S4-S5 linker; it reads SGLQMFGKTLKASFRQ. A helical membrane pass occupies residues 384 to 404; it reads LGMMAMVVMTGVIFFSTLVYF. Residues 405–417 are Extracellular-facing; it reads LEKDEPASKFHSI. The helical intramembrane region spans 418-429; the sequence is PAACWWCIVTMT. The stretch at 430–434 is an intramembrane region; the sequence is TVGYG. Positions 430–435 match the Selectivity filter motif; sequence TVGYGD. The Extracellular portion of the chain corresponds to 435-445; the sequence is DLTPVTVPGKL. Residues 446-466 traverse the membrane as a helical segment; sequence VATGAIACGVLVLALPITIIV. Topologically, residues 467 to 503 are cytoplasmic; it reads DNFMKVAETERPAGGNRYRTSQYPKATKSEQMILKVT. Residues 496 to 500 carry the Required for dendritic localization motif; it reads EQMIL.

The protein belongs to the potassium channel family. B (Shab) (TC 1.A.1.2) subfamily. Kv2.2/KCNB2 sub-subfamily. In terms of assembly, homotetramer or heterotetramer. Interacts with unc-101 (via N-terminus); which targets kvs-4 to dendrites. Expressed in the cholinergic motor neuron DA9, mechanosensory neurons ALM and PLM, and the interneuron PVPL.

It localises to the cell membrane. It is found in the perikaryon. Its subcellular location is the cell projection. The protein resides in the axon. The protein localises to the dendrite. In terms of biological role, voltage-gated potassium channel that mediates transmembrane potassium transport in excitable membranes. This is Probable voltage-gated potassium channel subunit kvs-4 from Caenorhabditis elegans.